The primary structure comprises 33 residues: Antimicrobial peptide MBP-1 (33 aa).

In terms of tissue distribution, predominantly in the embryo portion of the kernel.

It localises to the secreted. Its function is as follows. Inhibitor of both bacterial and fungal growth in vitro. This is Antimicrobial peptide MBP-1 from Zea mays (Maize).